Consider the following 100-residue polypeptide: Urease subunit gamma (100 aa).

The protein belongs to the urease gamma subunit family. In terms of assembly, heterotrimer of UreA (gamma), UreB (beta) and UreC (alpha) subunits. Three heterotrimers associate to form the active enzyme.

The protein localises to the cytoplasm. The enzyme catalyses urea + 2 H2O + H(+) = hydrogencarbonate + 2 NH4(+). It participates in nitrogen metabolism; urea degradation; CO(2) and NH(3) from urea (urease route): step 1/1. The sequence is that of Urease subunit gamma from Lysinibacillus sphaericus (strain C3-41).